The following is a 40-amino-acid chain: Large ribosomal subunit protein bL36A (40 aa).

Belongs to the bacterial ribosomal protein bL36 family.

This chain is Large ribosomal subunit protein bL36A, found in Renibacterium salmoninarum (strain ATCC 33209 / DSM 20767 / JCM 11484 / NBRC 15589 / NCIMB 2235).